The primary structure comprises 772 residues: 1,4-alpha-glucan branching enzyme GlgB (772 aa).

The active-site Nucleophile is Asp431. Glu484 acts as the Proton donor in catalysis.

Belongs to the glycosyl hydrolase 13 family. GlgB subfamily. In terms of assembly, monomer.

The catalysed reaction is Transfers a segment of a (1-&gt;4)-alpha-D-glucan chain to a primary hydroxy group in a similar glucan chain.. It functions in the pathway glycan biosynthesis; glycogen biosynthesis. Its function is as follows. Catalyzes the formation of the alpha-1,6-glucosidic linkages in glycogen by scission of a 1,4-alpha-linked oligosaccharide from growing alpha-1,4-glucan chains and the subsequent attachment of the oligosaccharide to the alpha-1,6 position. The protein is 1,4-alpha-glucan branching enzyme GlgB of Synechococcus sp. (strain RCC307).